Consider the following 134-residue polypeptide: Arginine decarboxylase proenzyme (134 aa).

Ser-82 serves as the catalytic Schiff-base intermediate with substrate; via pyruvic acid. At Ser-82 the chain carries Pyruvic acid (Ser); by autocatalysis. The Proton acceptor; for processing activity role is filled by His-87. Cys-102 serves as the catalytic Proton donor; for catalytic activity.

The protein belongs to the prokaryotic AdoMetDC family. Type 1 subfamily. As to quaternary structure, heterooctamer of four alpha and four beta chains arranged as a tetramer of alpha/beta heterodimers. The cofactor is pyruvate. Post-translationally, is synthesized initially as an inactive proenzyme. Formation of the active enzyme involves a self-maturation process in which the active site pyruvoyl group is generated from an internal serine residue via an autocatalytic post-translational modification. Two non-identical subunits are generated from the proenzyme in this reaction, and the pyruvate is formed at the N-terminus of the alpha chain, which is derived from the carboxyl end of the proenzyme. The post-translation cleavage follows an unusual pathway, termed non-hydrolytic serinolysis, in which the side chain hydroxyl group of the serine supplies its oxygen atom to form the C-terminus of the beta chain, while the remainder of the serine residue undergoes an oxidative deamination to produce ammonia and the pyruvoyl group blocking the N-terminus of the alpha chain.

It catalyses the reaction L-arginine + H(+) = agmatine + CO2. Its pathway is amine and polyamine biosynthesis; agmatine biosynthesis; agmatine from L-arginine: step 1/1. Its function is as follows. Specifically catalyzes the decarboxylation of L-arginine to agmatine. Has no S-adenosylmethionine decarboxylase (AdoMetDC) activity. The protein is Arginine decarboxylase proenzyme of Saccharolobus islandicus (strain M.16.4 / Kamchatka #3) (Sulfolobus islandicus).